Reading from the N-terminus, the 1067-residue chain is UPF0507 protein KLLA0D01133g (1067 aa).

The 153-residue stretch at 280 to 432 folds into the VPS9 domain; the sequence is IVEDQELEHR…FHQDTVDSLT (153 aa).

Belongs to the UPF0507 family.

This Kluyveromyces lactis (strain ATCC 8585 / CBS 2359 / DSM 70799 / NBRC 1267 / NRRL Y-1140 / WM37) (Yeast) protein is UPF0507 protein KLLA0D01133g.